The primary structure comprises 296 residues: Bifunctional protein FolD (296 aa).

NADP(+) is bound by residues 168 to 170 (GRS), Ser197, and Thr238.

It belongs to the tetrahydrofolate dehydrogenase/cyclohydrolase family. As to quaternary structure, homodimer.

The enzyme catalyses (6R)-5,10-methylene-5,6,7,8-tetrahydrofolate + NADP(+) = (6R)-5,10-methenyltetrahydrofolate + NADPH. The catalysed reaction is (6R)-5,10-methenyltetrahydrofolate + H2O = (6R)-10-formyltetrahydrofolate + H(+). It functions in the pathway one-carbon metabolism; tetrahydrofolate interconversion. In terms of biological role, catalyzes the oxidation of 5,10-methylenetetrahydrofolate to 5,10-methenyltetrahydrofolate and then the hydrolysis of 5,10-methenyltetrahydrofolate to 10-formyltetrahydrofolate. In Porphyromonas gingivalis (strain ATCC BAA-308 / W83), this protein is Bifunctional protein FolD.